We begin with the raw amino-acid sequence, 248 residues long: MQSLIKYQPKSPLKYLSSYFGDRKKNLFKLVLLGAPGAGKGTQAKHLVSKYSLKHISPGNLLREEMNRNSPITAQIKDYVSKGQLVPDSIVIKLIENHIATIGDSNWLLDGFPRSESQAAALRASPDLFPTHIVELKVDQEAVVQRLGGRRFDPITGNTYHIIYDPPPPDIADRVVVRTDDREDVIRERFRVYAENKDLVDKVFNHSVVSINCEGQTIDEVSLQLDRVLSMPSTIHPSIIMPERNKKQ.

37–42 (GAGKGT) provides a ligand contact to ATP. Positions 57 to 86 (SPGNLLREEMNRNSPITAQIKDYVSKGQLV) are NMP. Residues arginine 63, 84–86 (QLV), 111–114 (GFPR), and glutamine 118 each bind AMP. The tract at residues 149–181 (GRRFDPITGNTYHIIYDPPPPDIADRVVVRTDD) is LID. Arginine 150 contributes to the ATP binding site. AMP-binding residues include arginine 178 and arginine 189.

The protein belongs to the adenylate kinase family. Monomer.

Its subcellular location is the cytoplasm. It catalyses the reaction AMP + ATP = 2 ADP. In terms of biological role, catalyzes the reversible transfer of the terminal phosphate group between ATP and AMP. Plays an important role in cellular energy homeostasis and in adenine nucleotide metabolism. This chain is Adenylate kinase, found in Giardia intestinalis (Giardia lamblia).